A 319-amino-acid chain; its full sequence is Annexin A4 (319 aa).

Residue T7 is modified to Phosphothreonine. Phosphoserine is present on S12. Annexin repeat units follow at residues F14–T85, P86–A157, A169–K241, and N245–G316. 3 positions are modified to N6-acetyllysine: K213, K293, and K300.

This sequence belongs to the annexin family.

Its subcellular location is the zymogen granule membrane. In terms of biological role, calcium/phospholipid-binding protein which promotes membrane fusion and is involved in exocytosis. The protein is Annexin A4 (Anxa4) of Rattus norvegicus (Rat).